Consider the following 475-residue polypeptide: Bifunctional aspartate aminotransferase and glutamate/aspartate-prephenate aminotransferase (475 aa).

A chloroplast-targeting transit peptide spans 1-55 (MASQSSVAVISSAAARGESFPDSKKPIGSVRFQQPLRLSFSYCKSGNMSSRICAM). Glycine 107, tryptophan 193, and asparagine 243 together coordinate L-aspartate. At lysine 306 the chain carries N6-(pyridoxal phosphate)lysine. L-aspartate is bound at residue arginine 445.

The protein belongs to the class-I pyridoxal-phosphate-dependent aminotransferase family. In terms of assembly, homodimer. The cofactor is pyridoxal 5'-phosphate.

Its subcellular location is the plastid. It localises to the chloroplast. The catalysed reaction is L-aspartate + 2-oxoglutarate = oxaloacetate + L-glutamate. It catalyses the reaction L-arogenate + oxaloacetate = prephenate + L-aspartate. The enzyme catalyses L-arogenate + 2-oxoglutarate = prephenate + L-glutamate. The protein operates within amino-acid biosynthesis; L-phenylalanine biosynthesis; L-arogenate from prephenate (L-Asp route): step 1/1. Its pathway is amino-acid biosynthesis; L-phenylalanine biosynthesis; L-arogenate from prephenate (L-Glu route): step 1/1. Functionally, prokaryotic-type aspartate aminotransferase. Also has a prenate transaminase activity. Involved in the aromatic amino acids biosynthesis pathway via the arogenate route. Required for the transamination of prephenate into arogenate. Required for early development of the embryo. This Arabidopsis thaliana (Mouse-ear cress) protein is Bifunctional aspartate aminotransferase and glutamate/aspartate-prephenate aminotransferase (PAT).